Consider the following 214-residue polypeptide: Octanoyltransferase (214 aa).

A BPL/LPL catalytic domain is found at 34–214 (GVQKELVWLL…KFNEIFSNFN (181 aa)). Substrate is bound by residues 73 to 80 (RGGKYTYH), 145 to 147 (AFG), and 158 to 160 (GVS). Cysteine 176 functions as the Acyl-thioester intermediate in the catalytic mechanism.

The protein belongs to the LipB family.

It localises to the cytoplasm. The catalysed reaction is octanoyl-[ACP] + L-lysyl-[protein] = N(6)-octanoyl-L-lysyl-[protein] + holo-[ACP] + H(+). Its pathway is protein modification; protein lipoylation via endogenous pathway; protein N(6)-(lipoyl)lysine from octanoyl-[acyl-carrier-protein]: step 1/2. In terms of biological role, catalyzes the transfer of endogenously produced octanoic acid from octanoyl-acyl-carrier-protein onto the lipoyl domains of lipoate-dependent enzymes. Lipoyl-ACP can also act as a substrate although octanoyl-ACP is likely to be the physiological substrate. This Ehrlichia chaffeensis (strain ATCC CRL-10679 / Arkansas) protein is Octanoyltransferase.